The following is a 70-amino-acid chain: uncharacterized protein (70 aa).

Residues 4 to 24 (VKTIAMLAMLVIVAALIYMGY) form a helical membrane-spanning segment.

It localises to the host membrane. This is an uncharacterized protein from Dryophytes versicolor (chameleon treefrog).